The sequence spans 165 residues: Phosphopantetheine adenylyltransferase (165 aa).

Thr-10 lines the substrate pocket. Residues 10–11 (TF) and His-18 contribute to the ATP site. Residues Lys-42, Leu-75, and Arg-89 each coordinate substrate. ATP-binding positions include 90-92 (GVR), Glu-100, and 125-131 (VSFISSS).

This sequence belongs to the bacterial CoaD family. Homohexamer. Requires Mg(2+) as cofactor.

The protein localises to the cytoplasm. The enzyme catalyses (R)-4'-phosphopantetheine + ATP + H(+) = 3'-dephospho-CoA + diphosphate. It functions in the pathway cofactor biosynthesis; coenzyme A biosynthesis; CoA from (R)-pantothenate: step 4/5. In terms of biological role, reversibly transfers an adenylyl group from ATP to 4'-phosphopantetheine, yielding dephospho-CoA (dPCoA) and pyrophosphate. This chain is Phosphopantetheine adenylyltransferase, found in Buchnera aphidicola subsp. Acyrthosiphon pisum (strain 5A).